The chain runs to 348 residues: Cell surface glycoprotein CD200 receptor 1 (348 aa).

The N-terminal stretch at 1 to 24 (MLCPWRTANLGLLLILTIFLVAEA) is a signal peptide. The Extracellular portion of the chain corresponds to 29–265 (QPNNSLMLQT…PVPGAKKSAK (237 aa)). 9 N-linked (GlcNAc...) asparagine glycosylation sites follow: Asn31, Asn60, Asn69, Asn116, Asn122, Asn185, Asn218, Asn233, and Asn247. Intrachain disulfides connect Cys83–Cys155 and Cys107–Cys123. The 92-residue stretch at 160 to 251 (PDGNFHRGYH…SHLTGNKSLY (92 aa)) folds into the Ig-like C2-type domain. 2 disulfide bridges follow: Cys190–Cys239 and Cys209–Cys227. A helical membrane pass occupies residues 266 to 286 (LYIPYIILTIIILTIVGFIWL). Over 287 to 348 (LKVNGCRKYK…SEVDTDLHTL (62 aa)) the chain is Cytoplasmic.

Belongs to the CD200R family. As to quaternary structure, CD200 and CD200R1 interact via their respective N-terminal Ig-like domains. Interacts with Human herpesvirus 8 vOX2 protein. (Microbial infection) Interacts with human herpesvirus 8/HHV-8 protein vOX2/K14. In terms of tissue distribution, expressed in granulocytes, monocytes, most T-cells, neutrophils, basophils and a subset of NK, NKT and B-cells (at protein level). Expressed in bone marrow, lymph nodes, spleen, lung, liver, spinal cord, kidney. Expressed in monocyte-derived dendritic and mast cells.

The protein localises to the cell membrane. It localises to the secreted. In terms of biological role, inhibitory receptor for the CD200/OX2 cell surface glycoprotein. Limits inflammation by inhibiting the expression of pro-inflammatory molecules including TNF-alpha, interferons, and inducible nitric oxide synthase (iNOS) in response to selected stimuli. Also binds to HHV-8 K14 viral CD200 homolog with identical affinity and kinetics as the host CD200. In Homo sapiens (Human), this protein is Cell surface glycoprotein CD200 receptor 1 (CD200R1).